Here is a 628-residue protein sequence, read N- to C-terminus: tRNA uridine 5-carboxymethylaminomethyl modification enzyme MnmG (628 aa).

13–18 provides a ligand contact to FAD; that stretch reads GAGHAG. 273-287 is a binding site for NAD(+); sequence GPRYCPSIEDKIVRF.

The protein belongs to the MnmG family. As to quaternary structure, homodimer. Heterotetramer of two MnmE and two MnmG subunits. It depends on FAD as a cofactor.

The protein resides in the cytoplasm. Functionally, NAD-binding protein involved in the addition of a carboxymethylaminomethyl (cmnm) group at the wobble position (U34) of certain tRNAs, forming tRNA-cmnm(5)s(2)U34. This is tRNA uridine 5-carboxymethylaminomethyl modification enzyme MnmG from Buchnera aphidicola subsp. Acyrthosiphon pisum (strain APS) (Acyrthosiphon pisum symbiotic bacterium).